The chain runs to 1196 residues: Nucleolar protein 6 (1196 aa).

Disordered regions lie at residues 1 to 75 (MPGK…VKPP) and 1140 to 1196 (KREQ…KALK). Positions 22–31 (HAEDHSDLEH) are enriched in basic and acidic residues. Residues 1165 to 1174 (KPKKHRKRKG) are compositionally biased toward basic residues.

This sequence belongs to the NRAP family. As to quaternary structure, part of the small subunit (SSU) processome, composed of more than 70 proteins and the RNA chaperone small nucleolar RNA (snoRNA) U3.

It is found in the nucleus. Its subcellular location is the nucleolus. The protein localises to the chromosome. Its function is as follows. Part of the small subunit (SSU) processome, first precursor of the small eukaryotic ribosomal subunit. During the assembly of the SSU processome in the nucleolus, many ribosome biogenesis factors, an RNA chaperone and ribosomal proteins associate with the nascent pre-rRNA and work in concert to generate RNA folding, modifications, rearrangements and cleavage as well as targeted degradation of pre-ribosomal RNA by the RNA exosome. In Drosophila sechellia (Fruit fly), this protein is Nucleolar protein 6.